We begin with the raw amino-acid sequence, 23 residues long: Protein male-specific 40 (23 aa).

As to expression, during early embryogenesis expression is initially detected at the early cleavage stages in the nucleus of two discrete cells. Subsequently, expression is abundant in the cytoplasm of the newly formed pole cells. Male-specific expression during the third larval instar.

The protein resides in the cytoplasm. It is found in the nucleus. The chain is Protein male-specific 40 from Drosophila melanogaster (Fruit fly).